Reading from the N-terminus, the 273-residue chain is Dermonecrotic toxin LapSicTox-alphaIB1c (273 aa).

H5 is a catalytic residue. 2 residues coordinate Mg(2+): E25 and D27. Catalysis depends on H41, which acts as the Nucleophile. 2 cysteine pairs are disulfide-bonded: C45-C51 and C47-C190. Residue D85 participates in Mg(2+) binding. N250 is a glycosylation site (N-linked (GlcNAc...) asparagine).

It belongs to the arthropod phospholipase D family. Class II subfamily. Mg(2+) serves as cofactor. In terms of tissue distribution, expressed by the venom gland.

It is found in the secreted. It carries out the reaction an N-(acyl)-sphingosylphosphocholine = an N-(acyl)-sphingosyl-1,3-cyclic phosphate + choline. The catalysed reaction is an N-(acyl)-sphingosylphosphoethanolamine = an N-(acyl)-sphingosyl-1,3-cyclic phosphate + ethanolamine. It catalyses the reaction a 1-acyl-sn-glycero-3-phosphocholine = a 1-acyl-sn-glycero-2,3-cyclic phosphate + choline. The enzyme catalyses a 1-acyl-sn-glycero-3-phosphoethanolamine = a 1-acyl-sn-glycero-2,3-cyclic phosphate + ethanolamine. Functionally, dermonecrotic toxins cleave the phosphodiester linkage between the phosphate and headgroup of certain phospholipids (sphingolipid and lysolipid substrates), forming an alcohol (often choline) and a cyclic phosphate. This toxin acts on sphingomyelin (SM). It may also act on ceramide phosphoethanolamine (CPE), lysophosphatidylcholine (LPC) and lysophosphatidylethanolamine (LPE), but not on lysophosphatidylserine (LPS), and lysophosphatidylglycerol (LPG). It acts by transphosphatidylation, releasing exclusively cyclic phosphate products as second products. Induces dermonecrosis, hemolysis, increased vascular permeability, edema, inflammatory response, and platelet aggregation. The protein is Dermonecrotic toxin LapSicTox-alphaIB1c of Loxosceles apachea (Apache recluse spider).